A 783-amino-acid polypeptide reads, in one-letter code: BMP/retinoic acid-inducible neural-specific protein 2 (783 aa).

The first 33 residues, 1 to 33 (MRWQCGTRFRGLRPAVAPWTALLALGLPGWVLA), serve as a signal peptide directing secretion. Residues 85 to 281 (RYRIYREFAR…FVAAALSYIT (197 aa)) enclose the MACPF domain. N-linked (GlcNAc...) asparagine glycosylation is found at Asn-185, Asn-354, Asn-473, Asn-579, Asn-626, and Asn-658.

The protein belongs to the BRINP family.

Its subcellular location is the secreted. Its function is as follows. Inhibits neuronal cell proliferation by negative regulation of the cell cycle transition. The sequence is that of BMP/retinoic acid-inducible neural-specific protein 2 (BRINP2) from Homo sapiens (Human).